A 467-amino-acid chain; its full sequence is Cysteine--tRNA ligase (467 aa).

Zn(2+) is bound at residue Cys-29. The short motif at 31 to 41 is the 'HIGH' region element; sequence PTVYNYVHIGN. Residues Cys-209, His-234, and Glu-238 each coordinate Zn(2+). A 'KMSKS' region motif is present at residues 267-271; sequence KMSKS. Lys-270 contacts ATP.

Belongs to the class-I aminoacyl-tRNA synthetase family. Monomer. It depends on Zn(2+) as a cofactor.

It localises to the cytoplasm. The catalysed reaction is tRNA(Cys) + L-cysteine + ATP = L-cysteinyl-tRNA(Cys) + AMP + diphosphate. This Xylella fastidiosa (strain 9a5c) protein is Cysteine--tRNA ligase.